Consider the following 490-residue polypeptide: Cis-aconitate decarboxylase (490 aa).

The protein belongs to the PrpD family. Homodimer.

The protein resides in the mitochondrion. It catalyses the reaction cis-aconitate + H(+) = itaconate + CO2. In terms of biological role, involved in the production of itaconic acid, a soluble unsaturated dicarboxylic acid mainly produced from sugars. The protein is Cis-aconitate decarboxylase (cad1) of Aspergillus terreus (strain NIH 2624 / FGSC A1156).